The following is a 334-amino-acid chain: Putative B3 domain-containing protein At5g66980 (334 aa).

2 DNA-binding regions (TF-B3) span residues 8–105 (LQFF…FAND) and 218–317 (HPHF…VSGR).

It localises to the nucleus. This chain is Putative B3 domain-containing protein At5g66980, found in Arabidopsis thaliana (Mouse-ear cress).